The sequence spans 568 residues: Glycine--tRNA ligase (568 aa).

The substrate site is built by Arg-97 and Glu-163. ATP-binding positions include 195-197, 205-210, 322-323, and 441-444; these read RNE, IRLREF, EC, and GIDR. 210–214 contributes to the substrate binding site; it reads FTQAE. 437–441 serves as a coordination point for substrate; sequence EPSFG.

This sequence belongs to the class-II aminoacyl-tRNA synthetase family.

The protein resides in the cytoplasm. It carries out the reaction tRNA(Gly) + glycine + ATP = glycyl-tRNA(Gly) + AMP + diphosphate. Functionally, catalyzes the attachment of glycine to tRNA(Gly). This chain is Glycine--tRNA ligase, found in Pyrococcus furiosus (strain ATCC 43587 / DSM 3638 / JCM 8422 / Vc1).